A 152-amino-acid chain; its full sequence is Xanthine-guanine phosphoribosyltransferase (152 aa).

5-phospho-alpha-D-ribose 1-diphosphate is bound by residues Arg37–Gly38, Arg69, and Asp88–Thr96. Arg69 is a GMP binding site. Asp89 is a binding site for Mg(2+). Guanine is bound by residues Asp92 and Ile135. Positions 92 and 135 each coordinate xanthine. GMP-binding positions include Asp92–Thr96 and Trp134–Ile135.

It belongs to the purine/pyrimidine phosphoribosyltransferase family. XGPT subfamily. As to quaternary structure, homotetramer. Mg(2+) is required as a cofactor.

It localises to the cell inner membrane. The catalysed reaction is GMP + diphosphate = guanine + 5-phospho-alpha-D-ribose 1-diphosphate. It catalyses the reaction XMP + diphosphate = xanthine + 5-phospho-alpha-D-ribose 1-diphosphate. It carries out the reaction IMP + diphosphate = hypoxanthine + 5-phospho-alpha-D-ribose 1-diphosphate. It participates in purine metabolism; GMP biosynthesis via salvage pathway; GMP from guanine: step 1/1. Its pathway is purine metabolism; XMP biosynthesis via salvage pathway; XMP from xanthine: step 1/1. In terms of biological role, purine salvage pathway enzyme that catalyzes the transfer of the ribosyl-5-phosphate group from 5-phospho-alpha-D-ribose 1-diphosphate (PRPP) to the N9 position of the 6-oxopurines guanine and xanthine to form the corresponding ribonucleotides GMP (guanosine 5'-monophosphate) and XMP (xanthosine 5'-monophosphate), with the release of PPi. To a lesser extent, also acts on hypoxanthine. The chain is Xanthine-guanine phosphoribosyltransferase from Salmonella choleraesuis (strain SC-B67).